A 335-amino-acid polypeptide reads, in one-letter code: Serpentine receptor class alpha-25 (335 aa).

5 consecutive transmembrane segments (helical) span residues 22–42 (IPVKISFLIIATVIFLSFYFA), 151–171 (LLIIQCLLSFGTYYVGLYGVP), 195–215 (FRTVVMVFCIIVIIFVYYLSV), 245–265 (CILIVLQFACILMSSYGVNYI), and 280–300 (LAPFFAGVTYASLCLPLVIYF).

It belongs to the nematode receptor-like protein sra family.

The protein localises to the membrane. The chain is Serpentine receptor class alpha-25 (sra-25) from Caenorhabditis elegans.